Reading from the N-terminus, the 843-residue chain is Ribosome biogenesis protein ERB1 (843 aa).

Disordered regions lie at residues 36 to 189 and 364 to 419; these read KKAA…RYIY and ADES…REYL. Composition is skewed to acidic residues over residues 77–92, 106–139, and 163–172; these read VDED…YDLE, SDSE…EVPS, and ESNDLSDDNE. A compositionally biased stretch (basic and acidic residues) spans 173–183; the sequence is PNYRIEKDANG. Residues 379–396 are compositionally biased toward pro residues; that stretch reads PKLPPPGYEESYHPPPEY. Over residues 397 to 406 the composition is skewed to basic and acidic residues; that stretch reads LPDKKEKEEW. 6 WD repeats span residues 487–526, 530–570, 668–706, 709–754, 758–797, and 813–843; these read GHRG…QLWS, SDED…LELE, KGGG…LVKI, PGAR…RPYK, YHQK…DLLS, and TGDL…RLWM.

It belongs to the WD repeat BOP1/ERB1 family. In terms of assembly, component of the NOP7 complex, composed of ERB1, NOP7 and YTM1. The complex is held together by ERB1, which interacts with NOP7 via its N-terminal domain and with YTM1 via a high-affinity interaction between the seven-bladed beta-propeller domains of the 2 proteins. The NOP7 complex associates with the 66S pre-ribosome.

The protein resides in the nucleus. It is found in the nucleolus. It localises to the nucleoplasm. Functionally, component of the NOP7 complex, which is required for maturation of the 25S and 5.8S ribosomal RNAs and formation of the 60S ribosome. This is Ribosome biogenesis protein ERB1 from Coccidioides immitis (strain RS) (Valley fever fungus).